A 334-amino-acid chain; its full sequence is Glyceraldehyde-3-phosphate dehydrogenase (334 aa).

Residues 10–11, Asp33, Lys77, and Thr119 contribute to the NAD(+) site; that span reads RI. D-glyceraldehyde 3-phosphate is bound by residues 149-151, Thr180, 209-210, and Arg232; these read SCT and TG. Cys150 acts as the Nucleophile in catalysis. Asn314 serves as a coordination point for NAD(+).

It belongs to the glyceraldehyde-3-phosphate dehydrogenase family. As to quaternary structure, homotetramer.

The protein resides in the cytoplasm. It carries out the reaction D-glyceraldehyde 3-phosphate + phosphate + NAD(+) = (2R)-3-phospho-glyceroyl phosphate + NADH + H(+). It participates in carbohydrate degradation; glycolysis; pyruvate from D-glyceraldehyde 3-phosphate: step 1/5. Catalyzes the oxidative phosphorylation of glyceraldehyde 3-phosphate (G3P) to 1,3-bisphosphoglycerate (BPG) using the cofactor NAD. The first reaction step involves the formation of a hemiacetal intermediate between G3P and a cysteine residue, and this hemiacetal intermediate is then oxidized to a thioester, with concomitant reduction of NAD to NADH. The reduced NADH is then exchanged with the second NAD, and the thioester is attacked by a nucleophilic inorganic phosphate to produce BPG. This chain is Glyceraldehyde-3-phosphate dehydrogenase (gap), found in Chlamydia trachomatis serovar L2 (strain ATCC VR-902B / DSM 19102 / 434/Bu).